Reading from the N-terminus, the 508-residue chain is Maturase K (508 aa).

It belongs to the intron maturase 2 family. MatK subfamily.

The protein resides in the plastid. It localises to the chloroplast. Usually encoded in the trnK tRNA gene intron. Probably assists in splicing its own and other chloroplast group II introns. The chain is Maturase K from Amburana cearensis (Cerejeira).